We begin with the raw amino-acid sequence, 125 residues long: Small ribosomal subunit protein bS6 (125 aa).

Belongs to the bacterial ribosomal protein bS6 family.

In terms of biological role, binds together with bS18 to 16S ribosomal RNA. This is Small ribosomal subunit protein bS6 (rpsF) from Pasteurella multocida (strain Pm70).